The chain runs to 215 residues: Probable transaldolase (215 aa).

K83 serves as the catalytic Schiff-base intermediate with substrate.

Belongs to the transaldolase family. Type 3B subfamily.

It is found in the cytoplasm. The enzyme catalyses D-sedoheptulose 7-phosphate + D-glyceraldehyde 3-phosphate = D-erythrose 4-phosphate + beta-D-fructose 6-phosphate. Its pathway is carbohydrate degradation; pentose phosphate pathway; D-glyceraldehyde 3-phosphate and beta-D-fructose 6-phosphate from D-ribose 5-phosphate and D-xylulose 5-phosphate (non-oxidative stage): step 2/3. In terms of biological role, transaldolase is important for the balance of metabolites in the pentose-phosphate pathway. The polypeptide is Probable transaldolase (Desulforapulum autotrophicum (strain ATCC 43914 / DSM 3382 / VKM B-1955 / HRM2) (Desulfobacterium autotrophicum)).